Reading from the N-terminus, the 185-residue chain is Adenine phosphoribosyltransferase (185 aa).

This sequence belongs to the purine/pyrimidine phosphoribosyltransferase family. As to quaternary structure, homodimer.

The protein localises to the cytoplasm. The enzyme catalyses AMP + diphosphate = 5-phospho-alpha-D-ribose 1-diphosphate + adenine. It participates in purine metabolism; AMP biosynthesis via salvage pathway; AMP from adenine: step 1/1. In terms of biological role, catalyzes a salvage reaction resulting in the formation of AMP, that is energically less costly than de novo synthesis. The polypeptide is Adenine phosphoribosyltransferase (Nocardioides sp. (strain ATCC BAA-499 / JS614)).